We begin with the raw amino-acid sequence, 387 residues long: Chorismate synthase (387 aa).

The NADP(+) site is built by Arg42 and Arg48. FMN is bound by residues 131–133 (RSS), 251–252 (QA), Gly295, 310–314 (KPIPT), and Arg336.

This sequence belongs to the chorismate synthase family. Homotetramer. FMNH2 serves as cofactor.

It carries out the reaction 5-O-(1-carboxyvinyl)-3-phosphoshikimate = chorismate + phosphate. Its pathway is metabolic intermediate biosynthesis; chorismate biosynthesis; chorismate from D-erythrose 4-phosphate and phosphoenolpyruvate: step 7/7. Its function is as follows. Catalyzes the anti-1,4-elimination of the C-3 phosphate and the C-6 proR hydrogen from 5-enolpyruvylshikimate-3-phosphate (EPSP) to yield chorismate, which is the branch point compound that serves as the starting substrate for the three terminal pathways of aromatic amino acid biosynthesis. This reaction introduces a second double bond into the aromatic ring system. This Syntrophotalea carbinolica (strain DSM 2380 / NBRC 103641 / GraBd1) (Pelobacter carbinolicus) protein is Chorismate synthase.